A 258-amino-acid chain; its full sequence is Axonemal dynein light intermediate polypeptide 1 (258 aa).

Disordered regions lie at residues 1–60 and 207–231; these read MIPP…CVPD and VNEQ…EEKK. The span at 34–44 shows a compositional bias: low complexity; it reads SPQQPGPSGSA. Residues 176-255 are a coiled coil; that stretch reads MRKALQAEQG…LKAQLEGIIA (80 aa).

This sequence belongs to the inner dynein arm light chain family. In terms of assembly, interacts with CFAP45. Interacts with DYNC1H1. Expressed in many tissues. A smaller 0.9 kb and a larger 2.5 kb transcripts were detected at the highest level in the testis, at medium levels in the prostate, heart, liver, lung and pancreas, at low levels in the ovary, skeletal muscle and small intestine. Not detected in spleen, colon epithelium, thymus or peripheral blood leukocytes. The 0.9 kb transcript is expressed at a 20-fold higher level than the 2.5 kb transcript in the testis. Expressed in spermatozoa and airway epithelial cells (at protein level).

It is found in the cell projection. The protein localises to the cilium. Its subcellular location is the flagellum. The protein resides in the dynein axonemal particle. It localises to the cytoplasm. In terms of biological role, involved in sperm flagellum assembly. The sequence is that of Axonemal dynein light intermediate polypeptide 1 from Homo sapiens (Human).